A 539-amino-acid chain; its full sequence is Phosphoenolpyruvate carboxykinase (ATP) (539 aa).

Substrate-binding residues include arginine 64, tyrosine 206, and lysine 212. ATP-binding positions include lysine 212, histidine 231, and glycine 247–threonine 255. Lysine 212 and histidine 231 together coordinate Mn(2+). Aspartate 268 lines the Mn(2+) pocket. ATP is bound by residues glutamate 296, arginine 332, arginine 448–isoleucine 449, and threonine 454. A substrate-binding site is contributed by arginine 332.

The protein belongs to the phosphoenolpyruvate carboxykinase (ATP) family. In terms of assembly, monomer. Mn(2+) is required as a cofactor.

The protein resides in the cytoplasm. It catalyses the reaction oxaloacetate + ATP = phosphoenolpyruvate + ADP + CO2. It functions in the pathway carbohydrate biosynthesis; gluconeogenesis. Involved in the gluconeogenesis. Catalyzes the conversion of oxaloacetate (OAA) to phosphoenolpyruvate (PEP) through direct phosphoryl transfer between the nucleoside triphosphate and OAA. The polypeptide is Phosphoenolpyruvate carboxykinase (ATP) (Cronobacter sakazakii (strain ATCC BAA-894) (Enterobacter sakazakii)).